A 212-amino-acid chain; its full sequence is Large ribosomal subunit protein uL1 (212 aa).

The protein belongs to the universal ribosomal protein uL1 family. Part of the 50S ribosomal subunit.

Its function is as follows. Binds directly to 23S rRNA. Probably involved in E site tRNA release. Protein L1 is also a translational repressor protein, it controls the translation of its operon by binding to its mRNA. The polypeptide is Large ribosomal subunit protein uL1 (Natronomonas pharaonis (strain ATCC 35678 / DSM 2160 / CIP 103997 / JCM 8858 / NBRC 14720 / NCIMB 2260 / Gabara) (Halobacterium pharaonis)).